Here is a 756-residue protein sequence, read N- to C-terminus: Zinc finger and BTB domain-containing protein 49 (756 aa).

Positions 25 to 91 (CDCMLVVRGV…MYTSRLDLNQ (67 aa)) constitute a BTB domain. Disordered stretches follow at residues 176-197 (APSANFSRPTEVSKPDAAGGSC), 226-290 (PSQV…LSEP), and 311-379 (SQQS…PSQA). Residues 226 to 242 (PSQVPATQQPLTRSAST) show a composition bias toward polar residues. Composition is skewed to basic and acidic residues over residues 319-341 (SHPEPDNGLARREESAAKEDAVE) and 348-365 (AEEKGRGELGPESSREEE). 7 C2H2-type zinc fingers span residues 386–408 (YACELCGKPFKHPSNLELHKRSH), 414–436 (FECNICGKHFSQAGNLQTHLRRH), 442–464 (YICEICGKRFAASGDVQRHIIIH), 470–492 (HLCDTCGRGFSNFSNLKEHKKTH), 498–520 (FTCDECGKSFNMQRKLVKHRVRH), 526–548 (YSCPACGKCFGGSGDLRRHVRTH), and 554–576 (YSCEVCSKCFTRSAVLRRHKRMH).

The protein belongs to the krueppel C2H2-type zinc-finger protein family. Interacts with EP300, KAT5/Tip60 and ZBTB17. The interaction with EP300 is direct and leads to synergistic induction of CDKN1A. On the CDKN1A promoter, forms a complex with ZBTB17; this interaction leads to additive CDKN1A transactivation. The interaction with ZBTB17 may block ZBTB17 repressor activity. As to expression, widely expressed, with highest levels in white adipose tissue and kidney, intermediate levels in brain, liver and heart, and lowest levels in spleen, brown adipose tissue and muscle.

The protein resides in the cytoplasm. The protein localises to the nucleus. In terms of biological role, transcription factor. Inhibits cell proliferation by activating either CDKN1A/p21 transcription or RB1 transcription. The sequence is that of Zinc finger and BTB domain-containing protein 49 (Zbtb49) from Mus musculus (Mouse).